Here is a 280-residue protein sequence, read N- to C-terminus: MKYIGAHVSASGGVFNAPINATQIGAKAFALFTKNQRQWSAKALDNKTIDLWFKELEKSKIEPKHILPHDSYLINLGHPDSDAREKSIESFLDEVQRCEILALDRLNFHPGSHLRKISEEECLDNIAESMNRVIDKTSGVKLVIENTAGQGSNLGYKFEHLAYIIDKIEDKSRVGVCIDTCHMFTAGYDIRTREAYDKTWNEFEKIVGFKYLSGMHINDSKPELGSRVDRHDSLGCGKIGWDAFEFIMNDKRMNDIPLVLETIDESIWAEEIKTLYNFIK.

The Zn(2+) site is built by histidine 69, histidine 109, glutamate 145, aspartate 179, histidine 182, histidine 216, aspartate 229, histidine 231, and glutamate 261.

The protein belongs to the AP endonuclease 2 family. The cofactor is Zn(2+).

It carries out the reaction Endonucleolytic cleavage to 5'-phosphooligonucleotide end-products.. Endonuclease IV plays a role in DNA repair. It cleaves phosphodiester bonds at apurinic or apyrimidinic (AP) sites, generating a 3'-hydroxyl group and a 5'-terminal sugar phosphate. This chain is Probable endonuclease 4, found in Aliarcobacter butzleri (strain RM4018) (Arcobacter butzleri).